A 191-amino-acid polypeptide reads, in one-letter code: Uridylate kinase (191 aa).

12–17 is a binding site for ATP; sequence GAGKGT. The segment at 33–63 is NMP; that stretch reads SAGDCLREEQNRPGSKYGNLIKEYIKDGKIV. A ribonucleoside 5'-phosphate contacts are provided by residues R39, 61–63, 91–94, and Q98; these read KIV and GFPR. The LID stretch occupies residues 128 to 138; that stretch reads HRGKTSGRSDD. R129 serves as a coordination point for ATP. The a ribonucleoside 5'-phosphate site is built by R135 and R146. Q174 serves as a coordination point for ATP.

The protein belongs to the adenylate kinase family. UMP-CMP kinase subfamily. As to quaternary structure, monomer. It depends on Mg(2+) as a cofactor.

Its subcellular location is the cytoplasm. It is found in the nucleus. The catalysed reaction is UMP + ATP = UDP + ADP. Functionally, catalyzes the phosphorylation of pyrimidine nucleoside monophosphates at the expense of ATP. Plays an important role in de novo pyrimidine nucleotide biosynthesis. Has preference for UMP and dUMP as phosphate acceptors, but can also use CMP, dCMP and AMP. The protein is Uridylate kinase of Schizosaccharomyces pombe (strain 972 / ATCC 24843) (Fission yeast).